A 182-amino-acid chain; its full sequence is Bifunctional dihydrofolate reductase-thymidylate synthase (182 aa).

The DHFR domain maps to 1-182 (AICACCKVLN…YFTRINNAYT (182 aa)). 25-31 (GLGNAGG) serves as a coordination point for NADP(+). Aspartate 40 provides a ligand contact to substrate. NADP(+) is bound by residues 93-95 (KTS) and 114-117 (LSRT). The substrate site is built by isoleucine 154, tyrosine 160, and threonine 175. 155 to 162 (GGASVYKE) is an NADP(+) binding site.

In the N-terminal section; belongs to the dihydrofolate reductase family. It in the C-terminal section; belongs to the thymidylate synthase family. In terms of assembly, homodimer.

It catalyses the reaction (6S)-5,6,7,8-tetrahydrofolate + NADP(+) = 7,8-dihydrofolate + NADPH + H(+). The enzyme catalyses dUMP + (6R)-5,10-methylene-5,6,7,8-tetrahydrofolate = 7,8-dihydrofolate + dTMP. Its pathway is cofactor biosynthesis; tetrahydrofolate biosynthesis; 5,6,7,8-tetrahydrofolate from 7,8-dihydrofolate: step 1/1. Its function is as follows. Bifunctional enzyme. Involved in de novo dTMP biosynthesis. Key enzyme in folate metabolism. Catalyzes an essential reaction for de novo glycine and purine synthesis, DNA precursor synthesis, and for the conversion of dUMP to dTMP. The protein is Bifunctional dihydrofolate reductase-thymidylate synthase of Plasmodium vinckei.